We begin with the raw amino-acid sequence, 158 residues long: Ribonuclease H (158 aa).

One can recognise an RNase H type-1 domain in the interval 3–144 (GLKQLLIFTD…CDTLAREAAE (142 aa)). Positions 12, 50, 72, and 136 each coordinate Mg(2+).

Belongs to the RNase H family. Monomer. The cofactor is Mg(2+).

The protein resides in the cytoplasm. The enzyme catalyses Endonucleolytic cleavage to 5'-phosphomonoester.. Endonuclease that specifically degrades the RNA of RNA-DNA hybrids. The sequence is that of Ribonuclease H from Shewanella loihica (strain ATCC BAA-1088 / PV-4).